The primary structure comprises 429 residues: 3-phosphoshikimate 1-carboxyvinyltransferase (429 aa).

The 3-phosphoshikimate site is built by lysine 23, serine 24, and arginine 28. Lysine 23 provides a ligand contact to phosphoenolpyruvate. 2 residues coordinate phosphoenolpyruvate: glycine 95 and arginine 123. Positions 168, 170, 316, and 343 each coordinate 3-phosphoshikimate. Phosphoenolpyruvate is bound at residue glutamine 170. Catalysis depends on aspartate 316, which acts as the Proton acceptor. Phosphoenolpyruvate is bound by residues arginine 347 and arginine 389.

This sequence belongs to the EPSP synthase family. As to quaternary structure, monomer.

It localises to the cytoplasm. The catalysed reaction is 3-phosphoshikimate + phosphoenolpyruvate = 5-O-(1-carboxyvinyl)-3-phosphoshikimate + phosphate. Its pathway is metabolic intermediate biosynthesis; chorismate biosynthesis; chorismate from D-erythrose 4-phosphate and phosphoenolpyruvate: step 6/7. Functionally, catalyzes the transfer of the enolpyruvyl moiety of phosphoenolpyruvate (PEP) to the 5-hydroxyl of shikimate-3-phosphate (S3P) to produce enolpyruvyl shikimate-3-phosphate and inorganic phosphate. This chain is 3-phosphoshikimate 1-carboxyvinyltransferase, found in Bacillus cereus (strain G9842).